The following is a 305-amino-acid chain: MSQSDLDRQIAQLRNCENITEGEVKALCTKAREILVEESNVQRVDAPVTICGDIHGQFFDLMELFKVGGDCPDTNYLFLGDFVDRGFNSVETFLLLLALKVRYPDRITLIRGNHESRQITQVYGFYDECLRKYGSLNVWRYCTDIFDYLSLAAVIEEKIFCVHGGLSPSIKTMDDIRAIDRKQEVPHDGAMCDLMWSDPDEIEGWNLSPRGAGYLFGGDVVDDFNRKNNIELICRAHQLVMEGYRVMFNEQLVTVWSAPNYCYRCGNVASILELDENLTKQYKIFEAAQENKGLPAKKPIPDYFL.

Aspartate 53, histidine 55, aspartate 81, and asparagine 113 together coordinate Mn(2+). The active-site Proton donor is the histidine 114. Mn(2+) is bound by residues histidine 163 and histidine 237.

The protein belongs to the PPP phosphatase family. PP-4 (PP-X) subfamily. Mn(2+) serves as cofactor.

The enzyme catalyses O-phospho-L-seryl-[protein] + H2O = L-seryl-[protein] + phosphate. It carries out the reaction O-phospho-L-threonyl-[protein] + H2O = L-threonyl-[protein] + phosphate. This chain is Serine/threonine-protein phosphatase PP-X homolog 3 (Ppx3), found in Paramecium tetraurelia.